The primary structure comprises 80 residues: Adipogenin (80 aa).

Residues 14–34 (FSFLVFWFCLPVGLLLLLIIW) form a helical membrane-spanning segment.

This sequence belongs to the adipogenin family.

The protein resides in the membrane. It is found in the nucleus. Its function is as follows. Plays a role in stimulating adipocyte differentiation and development. This is Adipogenin from Homo sapiens (Human).